The primary structure comprises 430 residues: ETS domain-containing protein Elk-4 (430 aa).

The ETS DNA-binding region spans 5–85 (ITLWQFLLQL…NGQKFVYKFV (81 aa)). The span at 116-127 (SKDVEYGGKERP) shows a compositional bias: basic and acidic residues. Positions 116 to 138 (SKDVEYGGKERPPQPGAKTSSRN) are disordered. Residue Lys-166 forms a Glycyl lysine isopeptide (Lys-Gly) (interchain with G-Cter in SUMO2) linkage. 2 disordered regions span residues 245–279 (TTFN…DIDT) and 292–325 (PENL…KGLE). Pro residues predominate over residues 249–272 (PTPPVPSTPLPLKEPPRTPSPPLS). Basic and acidic residues predominate over residues 299–312 (PKNEDSALPEKDKT).

Belongs to the ETS family. In terms of assembly, interacts with SIRT7. As to expression, lung and liver.

It is found in the nucleus. Involved in both transcriptional activation and repression. Interaction with SIRT7 leads to recruitment and stabilization of SIRT7 at promoters, followed by deacetylation of histone H3 at 'Lys-18' (H3K18Ac) and subsequent transcription repression. Forms a ternary complex with the serum response factor (SRF). Requires DNA-bound SRF for ternary complex formation and makes extensive DNA contacts to the 5'side of SRF, but does not bind DNA autonomously. The protein is ETS domain-containing protein Elk-4 (Elk4) of Mus musculus (Mouse).